The following is a 251-amino-acid chain: Fibroblast growth factor-binding protein 1 (251 aa).

An N-terminal signal peptide occupies residues 1–20 (MRLHSLILLSFLLLATQAFS). The tract at residues 25–62 (KRAKNAPHSTAEEGVEGSAPSLGKAQNKQRSRTSKSLT) is disordered. Intrachain disulfides connect cysteine 74-cysteine 91, cysteine 100-cysteine 133, and cysteine 109-cysteine 145. The disordered stretch occupies residues 160-189 (NARGNTKPRKEKAEVSAREHNKVQEAVSTE). Basic and acidic residues predominate over residues 170–182 (EKAEVSAREHNKV). O-linked (GalNAc...) serine glycosylation occurs at serine 175. A sufficient for interaction with FGF2 and FGF2-induced effects region spans residues 210 to 251 (RDPECLEDPDVLNQRKTALEFCGESWSSICTFFLNMLQATSC). 2 disulfide bridges follow: cysteine 214-cysteine 251 and cysteine 231-cysteine 239.

The protein belongs to the fibroblast growth factor-binding protein family. In terms of assembly, found in a complex with FGFBP1, FGF1 and FGF2. Interacts with FGF1, FGF7, FGF10, FGF22 and HSPG2. Interacts with FGF2. In terms of tissue distribution, expressed in intestine, ovary, lung, placenta and normal and wounded skin.

It localises to the secreted. It is found in the extracellular space. The protein resides in the cell membrane. Acts as a carrier protein that releases fibroblast-binding factors (FGFs) from the extracellular matrix (EM) storage and thus enhances the mitogenic activity of FGFs. Enhances FGF2 signaling during tissue repair, angiogenesis and in tumor growth. The chain is Fibroblast growth factor-binding protein 1 (Fgfbp1) from Mus musculus (Mouse).